The primary structure comprises 194 residues: Peptidyl-tRNA hydrolase (194 aa).

A tRNA-binding site is contributed by Tyr-16. His-21 (proton acceptor) is an active-site residue. TRNA-binding residues include Phe-67, Asn-69, and Asn-115.

Belongs to the PTH family. In terms of assembly, monomer.

It is found in the cytoplasm. The catalysed reaction is an N-acyl-L-alpha-aminoacyl-tRNA + H2O = an N-acyl-L-amino acid + a tRNA + H(+). Functionally, hydrolyzes ribosome-free peptidyl-tRNAs (with 1 or more amino acids incorporated), which drop off the ribosome during protein synthesis, or as a result of ribosome stalling. Catalyzes the release of premature peptidyl moieties from peptidyl-tRNA molecules trapped in stalled 50S ribosomal subunits, and thus maintains levels of free tRNAs and 50S ribosomes. The polypeptide is Peptidyl-tRNA hydrolase (Sodalis glossinidius (strain morsitans)).